The following is a 115-amino-acid chain: Large ribosomal subunit protein bL19 (115 aa).

The protein belongs to the bacterial ribosomal protein bL19 family.

In terms of biological role, this protein is located at the 30S-50S ribosomal subunit interface and may play a role in the structure and function of the aminoacyl-tRNA binding site. This is Large ribosomal subunit protein bL19 from Streptococcus pneumoniae serotype 2 (strain D39 / NCTC 7466).